An 87-amino-acid chain; its full sequence is UPF0473 protein PTH_1066 (87 aa).

Belongs to the UPF0473 family.

This is UPF0473 protein PTH_1066 from Pelotomaculum thermopropionicum (strain DSM 13744 / JCM 10971 / SI).